The following is a 109-amino-acid chain: Large ribosomal subunit protein uL23 (109 aa).

It belongs to the universal ribosomal protein uL23 family. As to quaternary structure, part of the 50S ribosomal subunit. Contacts protein L29, and trigger factor when it is bound to the ribosome.

One of the early assembly proteins it binds 23S rRNA. One of the proteins that surrounds the polypeptide exit tunnel on the outside of the ribosome. Forms the main docking site for trigger factor binding to the ribosome. In Haemophilus influenzae (strain PittEE), this protein is Large ribosomal subunit protein uL23.